A 185-amino-acid polypeptide reads, in one-letter code: Ribosome-recycling factor (185 aa).

Belongs to the RRF family.

Its subcellular location is the cytoplasm. Functionally, responsible for the release of ribosomes from messenger RNA at the termination of protein biosynthesis. May increase the efficiency of translation by recycling ribosomes from one round of translation to another. In Lactococcus lactis subsp. lactis (strain IL1403) (Streptococcus lactis), this protein is Ribosome-recycling factor.